The following is a 239-amino-acid chain: ATP-dependent dethiobiotin synthetase BioD (239 aa).

15 to 20 (EIGKTF) contributes to the ATP binding site. Threonine 19 contacts Mg(2+). Residue lysine 40 is part of the active site. Residues aspartate 57, 118-121 (EGVG), and 178-179 (NH) contribute to the ATP site. Residues aspartate 57 and glutamate 118 each coordinate Mg(2+).

It belongs to the dethiobiotin synthetase family. Homodimer. Mg(2+) is required as a cofactor.

The protein resides in the cytoplasm. The enzyme catalyses (7R,8S)-7,8-diammoniononanoate + CO2 + ATP = (4R,5S)-dethiobiotin + ADP + phosphate + 3 H(+). The protein operates within cofactor biosynthesis; biotin biosynthesis; biotin from 7,8-diaminononanoate: step 1/2. Catalyzes a mechanistically unusual reaction, the ATP-dependent insertion of CO2 between the N7 and N8 nitrogen atoms of 7,8-diaminopelargonic acid (DAPA, also called 7,8-diammoniononanoate) to form a ureido ring. The chain is ATP-dependent dethiobiotin synthetase BioD from Burkholderia multivorans (strain ATCC 17616 / 249).